Reading from the N-terminus, the 543-residue chain is Biotinidase (543 aa).

A signal peptide spans 1–41; sequence MAHAHIQGGRRAKSRFVVCIMSGARSKLALFLCGCYVVALG. A CN hydrolase domain is found at 72 to 351; the sequence is NPLALISRQE…VGLIGAENAT (280 aa). Catalysis depends on Glu112, which acts as the Proton acceptor. The N-linked (GlcNAc...) asparagine glycan is linked to Asn119. Residue Asn150 is glycosylated (N-linked (GlcNAc...) (complex) asparagine). The N-linked (GlcNAc...) asparagine glycan is linked to Asn203. Lys212 (proton donor) is an active-site residue. The active-site Nucleophile is the Cys245. Residues Asn349, Asn402, and Asn489 are each glycosylated (N-linked (GlcNAc...) asparagine).

Belongs to the carbon-nitrogen hydrolase superfamily. BTD/VNN family.

Its subcellular location is the secreted. It localises to the extracellular space. It carries out the reaction biocytin + H2O = biotin + L-lysine. The enzyme catalyses biotin amide + H2O = biotin + NH4(+). Catalytic release of biotin from biocytin, the product of biotin-dependent carboxylases degradation. This is Biotinidase from Homo sapiens (Human).